The chain runs to 238 residues: ATP synthase subunit a (238 aa).

The next 5 membrane-spanning stretches (helical) occupy residues 18-38, 76-96, 117-137, 195-215, and 216-236; these read MSTVLMTTIACLIVFLITFIG, FIVLAYALLFYVFVANMLGLP, VLTLTMAAFVVILTHYYGIKI, LIGMFGAFLPLIVWQAFGLFI, and GAIQAYIFAMLAMVYMAHKVE.

The protein belongs to the ATPase A chain family. F-type ATPases have 2 components, CF(1) - the catalytic core - and CF(0) - the membrane proton channel. CF(1) has five subunits: alpha(3), beta(3), gamma(1), delta(1), epsilon(1). CF(0) has three main subunits: a(1), b(2) and c(9-12). The alpha and beta chains form an alternating ring which encloses part of the gamma chain. CF(1) is attached to CF(0) by a central stalk formed by the gamma and epsilon chains, while a peripheral stalk is formed by the delta and b chains.

It is found in the cell membrane. Its function is as follows. Key component of the proton channel; it plays a direct role in the translocation of protons across the membrane. This Alkalihalophilus pseudofirmus (strain ATCC BAA-2126 / JCM 17055 / OF4) (Bacillus pseudofirmus) protein is ATP synthase subunit a.